A 362-amino-acid chain; its full sequence is Transcription factor bHLH128 (362 aa).

A compositionally biased stretch (low complexity) spans 1–16 (MYQSSSSTSSSSQRSS). 4 disordered regions span residues 1–23 (MYQS…GGGL), 78–106 (SDST…SNKD), 120–140 (SQQH…YSLA), and 162–184 (LNQP…HSRL). The segment covering 78–96 (SDSTTCGVNNSSDGQKQLG) has biased composition (polar residues). Over residues 162–173 (LNQPTSDYSPQG) the composition is skewed to polar residues. Position 189 is a phosphoserine (Ser189). Positions 289–339 (CATHPRSIAERERRTRISGKLKKLQDLVPNMDKQTSYSDMLDLAVQHIKGL) constitute a bHLH domain.

Homodimer.

The protein localises to the nucleus. In Arabidopsis thaliana (Mouse-ear cress), this protein is Transcription factor bHLH128 (BHLH128).